The chain runs to 434 residues: 3-phosphoshikimate 1-carboxyvinyltransferase (434 aa).

Lys-22, Ser-23, and Arg-27 together coordinate 3-phosphoshikimate. Phosphoenolpyruvate is bound at residue Lys-22. 2 residues coordinate phosphoenolpyruvate: Gly-93 and Arg-121. 3-phosphoshikimate is bound by residues Ser-168, Ser-169, Gln-170, Ser-199, Asp-320, and Lys-347. A phosphoenolpyruvate-binding site is contributed by Gln-170. The active-site Proton acceptor is Asp-320. Residues Arg-351, Arg-394, and Lys-419 each coordinate phosphoenolpyruvate.

The protein belongs to the EPSP synthase family. Monomer.

It is found in the cytoplasm. The enzyme catalyses 3-phosphoshikimate + phosphoenolpyruvate = 5-O-(1-carboxyvinyl)-3-phosphoshikimate + phosphate. It participates in metabolic intermediate biosynthesis; chorismate biosynthesis; chorismate from D-erythrose 4-phosphate and phosphoenolpyruvate: step 6/7. Functionally, catalyzes the transfer of the enolpyruvyl moiety of phosphoenolpyruvate (PEP) to the 5-hydroxyl of shikimate-3-phosphate (S3P) to produce enolpyruvyl shikimate-3-phosphate and inorganic phosphate. The sequence is that of 3-phosphoshikimate 1-carboxyvinyltransferase from Burkholderia cenocepacia (strain ATCC BAA-245 / DSM 16553 / LMG 16656 / NCTC 13227 / J2315 / CF5610) (Burkholderia cepacia (strain J2315)).